The following is a 206-amino-acid chain: uncharacterized protein (206 aa).

The helical transmembrane segment at 166–186 (FYTGLSVIVGGATALALGLFF) threads the bilayer.

It localises to the membrane. This is an uncharacterized protein from Dictyostelium discoideum (Social amoeba).